Here is a 122-residue protein sequence, read N- to C-terminus: UPF0738 protein YjbL (122 aa).

The protein belongs to the UPF0738 family.

The polypeptide is UPF0738 protein YjbL (yjbL) (Bacillus subtilis (strain 168)).